A 78-amino-acid polypeptide reads, in one-letter code: Probable [Fe-S]-dependent transcriptional repressor (78 aa).

Residues Cys56, Cys61, Cys64, and Cys70 each coordinate iron-sulfur cluster.

It belongs to the FeoC family.

Its function is as follows. May function as a transcriptional regulator that controls feoABC expression. The polypeptide is Probable [Fe-S]-dependent transcriptional repressor (Cronobacter sakazakii (strain ATCC BAA-894) (Enterobacter sakazakii)).